The sequence spans 560 residues: DNA ligase B (560 aa).

K124 acts as the N6-AMP-lysine intermediate in catalysis.

It belongs to the NAD-dependent DNA ligase family. LigB subfamily.

It catalyses the reaction NAD(+) + (deoxyribonucleotide)n-3'-hydroxyl + 5'-phospho-(deoxyribonucleotide)m = (deoxyribonucleotide)n+m + AMP + beta-nicotinamide D-nucleotide.. In terms of biological role, catalyzes the formation of phosphodiester linkages between 5'-phosphoryl and 3'-hydroxyl groups in double-stranded DNA using NAD as a coenzyme and as the energy source for the reaction. The polypeptide is DNA ligase B (Escherichia coli O7:K1 (strain IAI39 / ExPEC)).